Here is a 149-residue protein sequence, read N- to C-terminus: Gamma-glutamylaminecyclotransferase (149 aa).

7–10 (YGTL) serves as a coordination point for substrate. Glutamate 82 (proton acceptor) is an active-site residue.

It belongs to the gamma-glutamylcyclotransferase family. As to quaternary structure, monomer.

It catalyses the reaction epsilon-(gamma-L-glutamyl)-L-lysine = 5-oxo-L-proline + L-lysine. Contributes to degradation of proteins cross-linked by transglutaminases by degrading the cross-link between a lysine and a glutamic acid residue. Catalyzes the formation of 5-oxo-L-proline from L-gamma-glutamyl-L-epsilon-lysine. Inactive with L-gamma-glutamyl-alpha-amino acid substrates such as L-gamma-glutamyl-L-alpha-cysteine and L-gamma-glutamyl-L-alpha-alanine. The polypeptide is Gamma-glutamylaminecyclotransferase (Ggact) (Rattus norvegicus (Rat)).